The sequence spans 207 residues: Holliday junction branch migration complex subunit RuvA (207 aa).

The interval 1 to 64 is domain I; sequence MIGRLRGNLL…EDAQLLYGFN (64 aa). The interval 65 to 143 is domain II; sequence TKNERALFRE…GWGAGDLFTP (79 aa). The tract at residues 144–158 is flexible linker; that stretch reads ATDAAPMDDGSEFIT. Positions 159 to 207 are domain III; the sequence is SPQSAVDEAVSALIALGYKPQQASKTVSQVAKPDMTSEVLIRESLKSMI.

It belongs to the RuvA family. As to quaternary structure, homotetramer. Forms an RuvA(8)-RuvB(12)-Holliday junction (HJ) complex. HJ DNA is sandwiched between 2 RuvA tetramers; dsDNA enters through RuvA and exits via RuvB. An RuvB hexamer assembles on each DNA strand where it exits the tetramer. Each RuvB hexamer is contacted by two RuvA subunits (via domain III) on 2 adjacent RuvB subunits; this complex drives branch migration. In the full resolvosome a probable DNA-RuvA(4)-RuvB(12)-RuvC(2) complex forms which resolves the HJ.

It localises to the cytoplasm. Its function is as follows. The RuvA-RuvB-RuvC complex processes Holliday junction (HJ) DNA during genetic recombination and DNA repair, while the RuvA-RuvB complex plays an important role in the rescue of blocked DNA replication forks via replication fork reversal (RFR). RuvA specifically binds to HJ cruciform DNA, conferring on it an open structure. The RuvB hexamer acts as an ATP-dependent pump, pulling dsDNA into and through the RuvAB complex. HJ branch migration allows RuvC to scan DNA until it finds its consensus sequence, where it cleaves and resolves the cruciform DNA. The protein is Holliday junction branch migration complex subunit RuvA of Aliivibrio fischeri (strain MJ11) (Vibrio fischeri).